Consider the following 157-residue polypeptide: Small ribosomal subunit protein uS7 (157 aa).

Belongs to the universal ribosomal protein uS7 family. Part of the 30S ribosomal subunit. Contacts proteins S9 and S11.

One of the primary rRNA binding proteins, it binds directly to 16S rRNA where it nucleates assembly of the head domain of the 30S subunit. Is located at the subunit interface close to the decoding center, probably blocks exit of the E-site tRNA. In Borrelia garinii subsp. bavariensis (strain ATCC BAA-2496 / DSM 23469 / PBi) (Borreliella bavariensis), this protein is Small ribosomal subunit protein uS7.